The chain runs to 73 residues: UPF0346 protein lp_1865 (73 aa).

The protein belongs to the UPF0346 family.

The chain is UPF0346 protein lp_1865 from Lactiplantibacillus plantarum (strain ATCC BAA-793 / NCIMB 8826 / WCFS1) (Lactobacillus plantarum).